The sequence spans 108 residues: Phosphoribosyl-ATP pyrophosphatase (108 aa).

The protein belongs to the PRA-PH family.

It localises to the cytoplasm. The enzyme catalyses 1-(5-phospho-beta-D-ribosyl)-ATP + H2O = 1-(5-phospho-beta-D-ribosyl)-5'-AMP + diphosphate + H(+). It participates in amino-acid biosynthesis; L-histidine biosynthesis; L-histidine from 5-phospho-alpha-D-ribose 1-diphosphate: step 2/9. The polypeptide is Phosphoribosyl-ATP pyrophosphatase (Thiobacillus denitrificans (strain ATCC 25259 / T1)).